Consider the following 245-residue polypeptide: Small ribosomal subunit protein uS2 (245 aa).

It belongs to the universal ribosomal protein uS2 family.

The chain is Small ribosomal subunit protein uS2 from Dehalococcoides mccartyi (strain CBDB1).